The chain runs to 7705 residues: Copine family protein 2 (7705 aa).

Disordered stretches follow at residues 1–61 (MNDY…RHSE), 269–360 (KEGN…NNSQ), 372–408 (SERKTAKQREQELLQRSERRSGGRTHSHEEYRRHQQP), 464–492 (GDRAHLQYRPRAQKGAAGPTTRGAPTSSV), 506–538 (STEPSPVPSRRALPKSASLSSVQQKQPIKTADG), 560–614 (DERA…QGPP), 1301–1358 (NRSE…DQQV), 4381–4427 (ELEP…RSES), and 6779–6800 (RDEHHEHISETKSYPRDGGKFT). Residues 12-25 (SSQKSNNQKISNNS) show a composition bias toward low complexity. Basic and acidic residues predominate over residues 269–282 (KEGNNPSCCRERGT). The span at 302-313 (STSTKVAVTSAS) shows a compositional bias: low complexity. Residues 318 to 336 (IKDHKKQLKKEKEKKKKMD) show a composition bias toward basic residues. Residues 372–404 (SERKTAKQREQELLQRSERRSGGRTHSHEEYRR) show a composition bias toward basic and acidic residues. Residues 522-532 (ASLSSVQQKQP) are compositionally biased toward polar residues. A compositionally biased stretch (basic and acidic residues) spans 560–587 (DERAKDFLRGDRSSRLSPQSERKNERQI). Positions 588-597 (QIRQQSSGPT) are enriched in polar residues. 2 stretches are compositionally biased toward basic and acidic residues: residues 598–611 (NRRETEIEYEEKRQ) and 1301–1335 (NRSELREMRSEEKRSNSMHHEESHYAHSSYEHTSE). The segment covering 4397–4409 (RQSRVYRSSSQVR) has biased composition (low complexity). Basic and acidic residues-rich tracts occupy residues 4411–4427 (PSEESIQKTEALRRSES) and 6779–6797 (RDEHHEHISETKSYPRDGG). One can recognise a VWFA domain in the interval 7475 to 7673 (NLIFGIDYTK…FHKVMFNAPN (199 aa)).

This sequence belongs to the copine family. Expressed in body wall muscle.

The chain is Copine family protein 2 (cpna-2) from Caenorhabditis elegans.